The primary structure comprises 195 residues: Putative nucleotidase BH1399 (195 aa).

Belongs to the 5'(3')-deoxyribonucleotidase family.

This is Putative nucleotidase BH1399 from Halalkalibacterium halodurans (strain ATCC BAA-125 / DSM 18197 / FERM 7344 / JCM 9153 / C-125) (Bacillus halodurans).